The chain runs to 145 residues: Transcription antitermination protein NusB (145 aa).

This sequence belongs to the NusB family.

In terms of biological role, involved in transcription antitermination. Required for transcription of ribosomal RNA (rRNA) genes. Binds specifically to the boxA antiterminator sequence of the ribosomal RNA (rrn) operons. The protein is Transcription antitermination protein NusB of Burkholderia ambifaria (strain MC40-6).